A 371-amino-acid chain; its full sequence is Protein arginine N-methyltransferase 1 (371 aa).

Residues lysine 50–glutamate 361 form the SAM-dependent MTase PRMT-type domain. Residues histidine 63, arginine 72, glycine 96, and glutamate 118 each contribute to the S-adenosyl-L-methionine site. Arginine 72 serves as a coordination point for S-adenosyl-L-homocysteine. Glutamate 118 contributes to the S-adenosyl-L-homocysteine binding site. Lysine 134 carries the N6-succinyllysine modification. A Glycyl lysine isopeptide (Lys-Gly) (interchain with G-Cter in ubiquitin) cross-link involves residue lysine 145. S-adenosyl-L-homocysteine contacts are provided by valine 146 and glutamate 147. Glutamate 147 is a binding site for S-adenosyl-L-methionine. Residues glutamate 162 and glutamate 171 contribute to the active site. 2 positions are modified to N6-acetyllysine: lysine 228 and lysine 233. Phosphoserine occurs at positions 304 and 307.

The protein belongs to the class I-like SAM-binding methyltransferase superfamily. Protein arginine N-methyltransferase family. As to quaternary structure, homodimer. Homooctamer; individual homodimers associates to form a homooctamer. Individual homodimers can associate to form a homohexamer. Heterodimer with PRMT8. Interacts with BTG1, BTG2, NFATC2IP and IFNAR1. Interacts with and methylates CHTOP, thereby enabling the interaction of CHTOP with the 5FMC complex. Interacts with ILF3 and SUPT5H. Interacts with and methylates FOXO1, leading to the nuclear retention of FOXO1 and the stimulation of FOXO1 transcriptional activity. Methylation of FOXO1 is increased upon oxidative stress. Interacts with and probably methylates ATXN2L. Component of the methylosome, a 20S complex containing at least CLNS1A/pICln, PRMT5/SKB1, WDR77/MEP50, PRMT1 and ERH. Interacts with DHX9 (via RGG region). Interacts (via N-terminus) with HABP4. Interacts with MAP3K5/ASK1; the interaction results in MAP3K5 methylation by PRMT1 which inhibits MAP3K5 activation. Interacts with TRIM48; the interaction results in ubiquitination of PRMT1 by TRIM48, leading to PRMT1 proteasomal degradation and activation of MAP3K5. Interacts with GATOR1 complex; this interaction is S-adenosyl-L-methionine (SAM) dependent and is perturbated by SAMTOR in a SAM-sensitive manner. Interacts with GFI1; promoting recognition and binding of MRE11 and TP53BP1 substrates by PRMT1. In terms of processing, polyubiquitinated at Lys-145 by the SCF(FBXL17) complex, leading to its subsequent degradation. Ubiquitination is regulated by acetylation at Lys-228 and Lys-233. Polyubiquitinated by E3 ubiquitin-protein ligase TRIM48, leading to suppression of MAP3K5/ASK1 methylation and subsequent MAP3K5 activation. Acetylation at Lys-228 and Lys-233 regulates ubiquitination by the SCF(FBXL17) complex. Acetylated at Lys-233 by p300/EP300. Deacetylated at Lys-228 and Lys-233 by SIRT1. Widely expressed. Expressed strongly in colorectal cancer cells (at protein level). Expressed strongly in colorectal cancer tissues compared to wild-type colon samples (at protein level). Expressed strongly in colorectal cancer tissues compared to wild-type colon samples.

The protein resides in the nucleus. The protein localises to the nucleoplasm. Its subcellular location is the cytoplasm. It localises to the cytosol. It is found in the lysosome membrane. The enzyme catalyses L-arginyl-[protein] + 2 S-adenosyl-L-methionine = N(omega),N(omega)-dimethyl-L-arginyl-[protein] + 2 S-adenosyl-L-homocysteine + 2 H(+). It carries out the reaction L-arginyl-[protein] + S-adenosyl-L-methionine = N(omega)-methyl-L-arginyl-[protein] + S-adenosyl-L-homocysteine + H(+). It catalyses the reaction N(omega)-methyl-L-arginyl-[protein] + S-adenosyl-L-methionine = N(omega),N(omega)-dimethyl-L-arginyl-[protein] + S-adenosyl-L-homocysteine + H(+). Arginine methyltransferase that methylates (mono and asymmetric dimethylation) the guanidino nitrogens of arginyl residues present in proteins such as ESR1, histone H2, H3 and H4, FMR1, ILF3, HNRNPA1, HNRNPD, NFATC2IP, SUPT5H, TAF15, EWS, HABP4, SERBP1, RBM15, FOXO1, CHTOP, MAP3K5/ASK1, MICU1 and NPRL2. Constitutes the main enzyme that mediates monomethylation and asymmetric dimethylation of histone H4 'Arg-3' (H4R3me1 and H4R3me2a, respectively), a specific tag for epigenetic transcriptional activation. May be involved in the regulation of TAF15 transcriptional activity, act as an activator of estrogen receptor (ER)-mediated transactivation, play a key role in neurite outgrowth and act as a negative regulator of megakaryocytic differentiation, by modulating p38 MAPK pathway. Methylates RBM15, promoting ubiquitination and degradation of RBM15. Methylates MRE11 and TP53BP1, promoting the DNA damage response. Methylates FOXO1 and retains it in the nucleus increasing its transcriptional activity. Methylates CHTOP and this methylation is critical for its 5-hydroxymethylcytosine (5hmC)-binding activity. Methylates MAP3K5/ASK1 at 'Arg-78' and 'Arg-80' which promotes association of MAP3K5 with thioredoxin and negatively regulates MAP3K5 association with TRAF2, inhibiting MAP3K5 stimulation and MAP3K5-induced activation of JNK. Methylates H4R3 in genes involved in glioblastomagenesis in a CHTOP- and/or TET1-dependent manner. Plays a role in regulating alternative splicing in the heart. Methylates NPRL2 at 'Arg-78' leading to inhibition of its GTPase activator activity and then the GATOR1 complex and consequently inducing timely mTORC1 activation under methionine-sufficient conditions. This is Protein arginine N-methyltransferase 1 from Homo sapiens (Human).